Here is a 500-residue protein sequence, read N- to C-terminus: Protein nucleotidyltransferase YdiU (500 aa).

ATP is bound by residues Gly-96, Gly-98, Arg-99, Lys-119, Asp-131, Gly-132, Arg-182, and Arg-189. Residue Asp-258 is the Proton acceptor of the active site. The Mg(2+) site is built by Asn-259 and Asp-268. Asp-268 serves as a coordination point for ATP.

The protein belongs to the SELO family. Mg(2+) serves as cofactor. Mn(2+) is required as a cofactor.

It catalyses the reaction L-seryl-[protein] + ATP = 3-O-(5'-adenylyl)-L-seryl-[protein] + diphosphate. The enzyme catalyses L-threonyl-[protein] + ATP = 3-O-(5'-adenylyl)-L-threonyl-[protein] + diphosphate. The catalysed reaction is L-tyrosyl-[protein] + ATP = O-(5'-adenylyl)-L-tyrosyl-[protein] + diphosphate. It carries out the reaction L-histidyl-[protein] + UTP = N(tele)-(5'-uridylyl)-L-histidyl-[protein] + diphosphate. It catalyses the reaction L-seryl-[protein] + UTP = O-(5'-uridylyl)-L-seryl-[protein] + diphosphate. The enzyme catalyses L-tyrosyl-[protein] + UTP = O-(5'-uridylyl)-L-tyrosyl-[protein] + diphosphate. In terms of biological role, nucleotidyltransferase involved in the post-translational modification of proteins. It can catalyze the addition of adenosine monophosphate (AMP) or uridine monophosphate (UMP) to a protein, resulting in modifications known as AMPylation and UMPylation. This Rhizobium johnstonii (strain DSM 114642 / LMG 32736 / 3841) (Rhizobium leguminosarum bv. viciae) protein is Protein nucleotidyltransferase YdiU.